A 175-amino-acid chain; its full sequence is Crossover junction endodeoxyribonuclease RuvC (175 aa).

Residues aspartate 12, glutamate 72, and aspartate 144 contribute to the active site. Mg(2+) is bound by residues aspartate 12, glutamate 72, and aspartate 144.

It belongs to the RuvC family. As to quaternary structure, homodimer which binds Holliday junction (HJ) DNA. The HJ becomes 2-fold symmetrical on binding to RuvC with unstacked arms; it has a different conformation from HJ DNA in complex with RuvA. In the full resolvosome a probable DNA-RuvA(4)-RuvB(12)-RuvC(2) complex forms which resolves the HJ. Mg(2+) is required as a cofactor.

Its subcellular location is the cytoplasm. It carries out the reaction Endonucleolytic cleavage at a junction such as a reciprocal single-stranded crossover between two homologous DNA duplexes (Holliday junction).. Functionally, the RuvA-RuvB-RuvC complex processes Holliday junction (HJ) DNA during genetic recombination and DNA repair. Endonuclease that resolves HJ intermediates. Cleaves cruciform DNA by making single-stranded nicks across the HJ at symmetrical positions within the homologous arms, yielding a 5'-phosphate and a 3'-hydroxyl group; requires a central core of homology in the junction. The consensus cleavage sequence is 5'-(A/T)TT(C/G)-3'. Cleavage occurs on the 3'-side of the TT dinucleotide at the point of strand exchange. HJ branch migration catalyzed by RuvA-RuvB allows RuvC to scan DNA until it finds its consensus sequence, where it cleaves and resolves the cruciform DNA. This Beijerinckia indica subsp. indica (strain ATCC 9039 / DSM 1715 / NCIMB 8712) protein is Crossover junction endodeoxyribonuclease RuvC.